The sequence spans 266 residues: Outer kinetochore KNL1 complex subunit ZWINT (266 aa).

Residues 95-115 form a disordered region; it reads DQNPDALASEDTSRQKATETK. Residues 105-115 are compositionally biased toward basic and acidic residues; the sequence is DTSRQKATETK. Positions 136–237 form a coiled coil; it reads LSEALPQVKE…QRNQSYLQLL (102 aa). Serine 232 and serine 265 each carry phosphoserine.

As to quaternary structure, component of the KNL1 complex composed of KNL1 and ZWINT. Part of the ten-subunit outer kinetochore KMN network that includes the KNL1, MIS12 and NDC80 complexes; a bioriented kinetochore contains approximately 150 copies of the network. Interacts with the MIS12 complex subunits MIS12 DSN1, and PMF1. Interacts with the NDC80 complex subunit NDC80 during mitosis. Interacts with ZW10. Interacts with CETN3. Expressed abundantly in brain and at lower levels in testis and kidney.

The protein resides in the nucleus. Its subcellular location is the chromosome. The protein localises to the centromere. It localises to the kinetochore. In terms of biological role, acts as a component of the outer kinetochore KNL1 complex that serves as a docking point for spindle assembly checkpoint components and mediates microtubule-kinetochore interactions. Kinetochores, consisting of a centromere-associated inner segment and a microtubule-contacting outer segment, play a crucial role in chromosome segregation by mediating the physical connection between centromeric DNA and spindle microtubules. The outer kinetochore is made up of the ten-subunit KMN network, comprising the MIS12, NDC80 and KNL1 complexes, and auxiliary microtubule-associated components; together they connect the outer kinetochore with the inner kinetochore, bind microtubules, and mediate interactions with mitotic checkpoint proteins that delay anaphase until chromosomes are bioriented on the spindle. Targets the RZZ complex to the kinetochore at prometaphase. Recruits MAD2L1 to the kinetochore, but is not required for BUB1B localization. In addition to orienting mitotic chromosomes, it is also essential for alignment of homologous chromosomes during meiotic metaphase I. In meiosis I, required to activate the spindle assembly checkpoint at unattached kinetochores to correct erroneous kinetochore-microtubule attachments. The sequence is that of Outer kinetochore KNL1 complex subunit ZWINT (Zwint) from Rattus norvegicus (Rat).